Reading from the N-terminus, the 201-residue chain is tRNA (guanine-N(7)-)-methyltransferase (201 aa).

Glu-33, Glu-58, Asp-85, and Asp-106 together coordinate S-adenosyl-L-methionine. The active site involves Asp-106. Substrate is bound by residues Lys-110, Asp-142, and 180 to 183 (TTYE).

Belongs to the class I-like SAM-binding methyltransferase superfamily. TrmB family.

It carries out the reaction guanosine(46) in tRNA + S-adenosyl-L-methionine = N(7)-methylguanosine(46) in tRNA + S-adenosyl-L-homocysteine. Its pathway is tRNA modification; N(7)-methylguanine-tRNA biosynthesis. Its function is as follows. Catalyzes the formation of N(7)-methylguanine at position 46 (m7G46) in tRNA. The protein is tRNA (guanine-N(7)-)-methyltransferase of Mesomycoplasma hyopneumoniae (strain 232) (Mycoplasma hyopneumoniae).